A 78-amino-acid chain; its full sequence is MAIHPKVKDIIVEQLGVDPDKVKAEASFIDDLGADSLDIVELVMAMEEEFDLEIPDEDAEKLKTVQDVASYLEKKGKA.

The 76-residue stretch at 1 to 76 folds into the Carrier domain; that stretch reads MAIHPKVKDI…DVASYLEKKG (76 aa). Position 36 is an O-(pantetheine 4'-phosphoryl)serine (S36).

This sequence belongs to the acyl carrier protein (ACP) family. 4'-phosphopantetheine is transferred from CoA to a specific serine of apo-ACP by AcpS. This modification is essential for activity because fatty acids are bound in thioester linkage to the sulfhydryl of the prosthetic group.

Its subcellular location is the cytoplasm. Its pathway is lipid metabolism; fatty acid biosynthesis. Functionally, carrier of the growing fatty acid chain in fatty acid biosynthesis. In Bdellovibrio bacteriovorus (strain ATCC 15356 / DSM 50701 / NCIMB 9529 / HD100), this protein is Acyl carrier protein.